The chain runs to 266 residues: Norfluorocurarine synthase 2 (266 aa).

Residues 11–121 (HFVLVHGAGH…IMPDSTHPPI (111 aa)) form the AB hydrolase-1 domain. Active-site residues include serine 86, aspartate 216, and histidine 244.

This sequence belongs to the AB hydrolase superfamily. Homodimer. Mainly expressed in roots.

It carries out the reaction 17-dehydropreakuammicine + H2O = norfluorocurarine + methanol + CO2. The protein operates within alkaloid biosynthesis. Functionally, hydrolase involved in the biosynthesis of curare monoterpene indole alkaloids (MIAs), natural products such as strychnine, a neurotoxic compound used as a pesticide to control rodents, and its pharmacologically active derivatives, including brucine, used to regulate blood pressure. Curare alkaloids act as animal glycine receptor antagonists. Catalyzes the conversion of dehydropreakuammicine to norfluorocurarine. The polypeptide is Norfluorocurarine synthase 2 (Strychnos nux-vomica (Poison nut)).